We begin with the raw amino-acid sequence, 613 residues long: tRNA 5-methylaminomethyl-2-thiouridine biosynthesis bifunctional protein MnmC (613 aa).

The segment at 1–225 is tRNA (mnm(5)s(2)U34)-methyltransferase; the sequence is MKKAKLIFKD…KREMIKAYLE (225 aa). Positions 252–613 are FAD-dependent cmnm(5)s(2)U34 oxidoreductase; sequence IGAGISSAVL…FLIRKLKKGL (362 aa).

This sequence in the N-terminal section; belongs to the methyltransferase superfamily. tRNA (mnm(5)s(2)U34)-methyltransferase family. It in the C-terminal section; belongs to the DAO family. Requires FAD as cofactor.

The protein resides in the cytoplasm. It catalyses the reaction 5-aminomethyl-2-thiouridine(34) in tRNA + S-adenosyl-L-methionine = 5-methylaminomethyl-2-thiouridine(34) in tRNA + S-adenosyl-L-homocysteine + H(+). Functionally, catalyzes the last two steps in the biosynthesis of 5-methylaminomethyl-2-thiouridine (mnm(5)s(2)U) at the wobble position (U34) in tRNA. Catalyzes the FAD-dependent demodification of cmnm(5)s(2)U34 to nm(5)s(2)U34, followed by the transfer of a methyl group from S-adenosyl-L-methionine to nm(5)s(2)U34, to form mnm(5)s(2)U34. The chain is tRNA 5-methylaminomethyl-2-thiouridine biosynthesis bifunctional protein MnmC from Campylobacter jejuni subsp. jejuni serotype O:2 (strain ATCC 700819 / NCTC 11168).